We begin with the raw amino-acid sequence, 227 residues long: Phosphoglycolate phosphatase (227 aa).

The active-site Nucleophile is Asp-13. Positions 13, 15, and 176 each coordinate Mg(2+).

The protein belongs to the HAD-like hydrolase superfamily. CbbY/CbbZ/Gph/YieH family. Mg(2+) serves as cofactor.

It catalyses the reaction 2-phosphoglycolate + H2O = glycolate + phosphate. The protein operates within organic acid metabolism; glycolate biosynthesis; glycolate from 2-phosphoglycolate: step 1/1. Specifically catalyzes the dephosphorylation of 2-phosphoglycolate. Is involved in the dissimilation of the intracellular 2-phosphoglycolate formed during the DNA repair of 3'-phosphoglycolate ends, a major class of DNA lesions induced by oxidative stress. This chain is Phosphoglycolate phosphatase, found in Nitrosospira multiformis (strain ATCC 25196 / NCIMB 11849 / C 71).